We begin with the raw amino-acid sequence, 293 residues long: Probable porphobilinogen deaminase (293 aa).

S-(dipyrrolylmethanemethyl)cysteine is present on Cys-233.

The protein belongs to the HMBS family. Requires dipyrromethane as cofactor.

The catalysed reaction is 4 porphobilinogen + H2O = hydroxymethylbilane + 4 NH4(+). It participates in porphyrin-containing compound metabolism; protoporphyrin-IX biosynthesis; coproporphyrinogen-III from 5-aminolevulinate: step 2/4. In terms of biological role, tetrapolymerization of the monopyrrole PBG into the hydroxymethylbilane pre-uroporphyrinogen in several discrete steps. This is Probable porphobilinogen deaminase from Saccharolobus islandicus (strain M.16.27) (Sulfolobus islandicus).